Here is a 347-residue protein sequence, read N- to C-terminus: NADH-ubiquinone oxidoreductase chain 2 (347 aa).

Transmembrane regions (helical) follow at residues 1-21 (MNPI…MIVM), 25-45 (HWLM…PILM), 60-80 (FLTQ…NLMF), 89-109 (IFNP…LGLS), 111-131 (FHFW…LILL), 149-169 (INLD…GWGG), 178-198 (IMAY…TYNP), 201-221 (TALN…LFML), 242-262 (SLIL…GFIP), 274-294 (DSII…YFYM), and 323-343 (MNFL…TPIM).

It belongs to the complex I subunit 2 family. In terms of assembly, core subunit of respiratory chain NADH dehydrogenase (Complex I) which is composed of 45 different subunits. Interacts with TMEM242.

Its subcellular location is the mitochondrion inner membrane. The enzyme catalyses a ubiquinone + NADH + 5 H(+)(in) = a ubiquinol + NAD(+) + 4 H(+)(out). Core subunit of the mitochondrial membrane respiratory chain NADH dehydrogenase (Complex I) which catalyzes electron transfer from NADH through the respiratory chain, using ubiquinone as an electron acceptor. Essential for the catalytic activity and assembly of complex I. The sequence is that of NADH-ubiquinone oxidoreductase chain 2 from Ceratotherium simum (White rhinoceros).